Here is a 602-residue protein sequence, read N- to C-terminus: Sodium- and chloride-dependent GABA transporter 2 (602 aa).

Over residues 1 to 13 (MDSRVSGTTSNGE) the composition is skewed to polar residues. The interval 1 to 22 (MDSRVSGTTSNGETKPVYPVME) is disordered. The Cytoplasmic segment spans residues 1-40 (MDSRVSGTTSNGETKPVYPVMEKKEEDGTLERGHWNNKME). Transmembrane regions (helical) follow at residues 41–61 (FVLSVAGEIIGLGNVWRFPYL), 68–88 (GAFFIPYLVFLFTCGIPVFLL), and 121–141 (IVILLNVYYIIVLAWALFYLF). Residues 142–206 (SSFTIDLPWG…GIQHLGALRW (65 aa)) lie on the Extracellular side of the membrane. Cys153 and Cys162 are oxidised to a cystine. N-linked (GlcNAc...) asparagine glycosylation occurs at Asn173. Helical transmembrane passes span 207–227 (ELALCLLLAWVICYFCIWKGV) and 233–253 (VVYFTATFPYLMLVVLLIRGV). Asn269 carries an N-linked (GlcNAc...) asparagine glycan. The next 7 helical transmembrane spans lie at 282–302 (AGTQIFFSFAICLGCLTALGS), 319–339 (FLNSGTSFVAGFAIFSILGFM), 366–386 (VVMLPFSPLWACCFFFMVVLL), 418–438 (VLILGVSVVSFLVGLIMLTEG), 453–473 (GMCLLFVAIFESLCVAWVYGA), 490–510 (PLIKYCWLFLTPAVCTATFLF), and 528–548 (WWGDALGWLLALSSMVCIPAW). The Cytoplasmic segment spans residues 549–602 (SLYRLGTLKGPFRERIRQLMCPAEDLPQRNPAGPSAPATPRTSLLRLTELESHC). Thr587 is subject to Phosphothreonine. Ser591 is modified (phosphoserine).

This sequence belongs to the sodium:neurotransmitter symporter (SNF) (TC 2.A.22) family. SLC6A13 subfamily. Expressed in brain, kidney, lung, liver and testis.

Its subcellular location is the cell membrane. The protein resides in the basolateral cell membrane. It catalyses the reaction 4-aminobutanoate(out) + chloride(out) + 2 Na(+)(out) = 4-aminobutanoate(in) + chloride(in) + 2 Na(+)(in). It carries out the reaction taurine(out) + chloride(out) + 2 Na(+)(out) = taurine(in) + chloride(in) + 2 Na(+)(in). The catalysed reaction is beta-alanine(out) + chloride(out) + 2 Na(+)(out) = beta-alanine(in) + chloride(in) + 2 Na(+)(in). The enzyme catalyses hypotaurine(out) + chloride(out) + 2 Na(+)(out) = hypotaurine(in) + chloride(in) + 2 Na(+)(in). With respect to regulation, GABA transport is inhibited by beta-alanine, 2,3-diaminopropionic acid and SNAP-5114. Functionally, mediates sodium- and chloride-dependent transport of gamma-aminobutyric acid (GABA). Mediates transport of beta-alanine. Can also mediate transport of taurine and hypotaurine. This chain is Sodium- and chloride-dependent GABA transporter 2 (SLC6A13), found in Homo sapiens (Human).